Reading from the N-terminus, the 301-residue chain is Glycine--tRNA ligase alpha subunit (301 aa).

This sequence belongs to the class-II aminoacyl-tRNA synthetase family. Tetramer of two alpha and two beta subunits.

The protein localises to the cytoplasm. The catalysed reaction is tRNA(Gly) + glycine + ATP = glycyl-tRNA(Gly) + AMP + diphosphate. The polypeptide is Glycine--tRNA ligase alpha subunit (Actinobacillus pleuropneumoniae serotype 5b (strain L20)).